Here is a 469-residue protein sequence, read N- to C-terminus: ATP synthase subunit beta (469 aa).

156 to 163 (GGAGVGKT) is an ATP binding site.

Belongs to the ATPase alpha/beta chains family. F-type ATPases have 2 components, CF(1) - the catalytic core - and CF(0) - the membrane proton channel. CF(1) has five subunits: alpha(3), beta(3), gamma(1), delta(1), epsilon(1). CF(0) has three main subunits: a(1), b(2) and c(9-12). The alpha and beta chains form an alternating ring which encloses part of the gamma chain. CF(1) is attached to CF(0) by a central stalk formed by the gamma and epsilon chains, while a peripheral stalk is formed by the delta and b chains.

The protein resides in the cell membrane. It catalyses the reaction ATP + H2O + 4 H(+)(in) = ADP + phosphate + 5 H(+)(out). Its function is as follows. Produces ATP from ADP in the presence of a proton gradient across the membrane. The catalytic sites are hosted primarily by the beta subunits. This Lactococcus lactis subsp. lactis (strain IL1403) (Streptococcus lactis) protein is ATP synthase subunit beta.